Consider the following 405-residue polypeptide: uncharacterized protein (405 aa).

It belongs to the UDP-glycosyltransferase family.

This is an uncharacterized protein from Bacillus subtilis (strain 168).